Here is a 274-residue protein sequence, read N- to C-terminus: 2,3,4,5-tetrahydropyridine-2,6-dicarboxylate N-succinyltransferase (274 aa).

Belongs to the transferase hexapeptide repeat family.

The protein localises to the cytoplasm. The enzyme catalyses (S)-2,3,4,5-tetrahydrodipicolinate + succinyl-CoA + H2O = (S)-2-succinylamino-6-oxoheptanedioate + CoA. It functions in the pathway amino-acid biosynthesis; L-lysine biosynthesis via DAP pathway; LL-2,6-diaminopimelate from (S)-tetrahydrodipicolinate (succinylase route): step 1/3. The sequence is that of 2,3,4,5-tetrahydropyridine-2,6-dicarboxylate N-succinyltransferase from Yersinia pseudotuberculosis serotype IB (strain PB1/+).